Reading from the N-terminus, the 237-residue chain is Uridylate kinase (237 aa).

Residue 12–15 participates in ATP binding; sequence KLSG. The segment at 20–25 is involved in allosteric activation by GTP; it reads GEDGLG. A UMP-binding site is contributed by glycine 54. Positions 55 and 59 each coordinate ATP. Residues aspartate 74 and 135 to 142 each bind UMP; that span reads TGNPFFTT. Threonine 162, tyrosine 168, and aspartate 171 together coordinate ATP.

It belongs to the UMP kinase family. As to quaternary structure, homohexamer.

The protein localises to the cytoplasm. It catalyses the reaction UMP + ATP = UDP + ADP. It participates in pyrimidine metabolism; CTP biosynthesis via de novo pathway; UDP from UMP (UMPK route): step 1/1. Allosterically activated by GTP. Inhibited by UTP. Its function is as follows. Catalyzes the reversible phosphorylation of UMP to UDP. This is Uridylate kinase from Haemophilus influenzae (strain 86-028NP).